The primary structure comprises 181 residues: Large ribosomal subunit protein uL5 (181 aa).

The protein belongs to the universal ribosomal protein uL5 family. As to quaternary structure, part of the 50S ribosomal subunit; part of the 5S rRNA/L5/L18/L25 subcomplex. Contacts the 5S rRNA and the P site tRNA. Forms a bridge to the 30S subunit in the 70S ribosome.

Its function is as follows. This is one of the proteins that bind and probably mediate the attachment of the 5S RNA into the large ribosomal subunit, where it forms part of the central protuberance. In the 70S ribosome it contacts protein S13 of the 30S subunit (bridge B1b), connecting the 2 subunits; this bridge is implicated in subunit movement. Contacts the P site tRNA; the 5S rRNA and some of its associated proteins might help stabilize positioning of ribosome-bound tRNAs. The chain is Large ribosomal subunit protein uL5 from Campylobacter hominis (strain ATCC BAA-381 / DSM 21671 / CCUG 45161 / LMG 19568 / NCTC 13146 / CH001A).